Here is a 956-residue protein sequence, read N- to C-terminus: Isoleucine--tRNA ligase (956 aa).

The short motif at Pro60–His70 is the 'HIGH' region element. Residue Glu583 coordinates L-isoleucyl-5'-AMP. A 'KMSKS' region motif is present at residues Lys624–Ser628. Position 627 (Lys627) interacts with ATP. Positions 921, 924, 938, and 941 each coordinate Zn(2+).

This sequence belongs to the class-I aminoacyl-tRNA synthetase family. IleS type 1 subfamily. In terms of assembly, monomer. It depends on Zn(2+) as a cofactor.

It is found in the cytoplasm. It catalyses the reaction tRNA(Ile) + L-isoleucine + ATP = L-isoleucyl-tRNA(Ile) + AMP + diphosphate. Its function is as follows. Catalyzes the attachment of isoleucine to tRNA(Ile). As IleRS can inadvertently accommodate and process structurally similar amino acids such as valine, to avoid such errors it has two additional distinct tRNA(Ile)-dependent editing activities. One activity is designated as 'pretransfer' editing and involves the hydrolysis of activated Val-AMP. The other activity is designated 'posttransfer' editing and involves deacylation of mischarged Val-tRNA(Ile). This Aquifex aeolicus (strain VF5) protein is Isoleucine--tRNA ligase.